Here is a 357-residue protein sequence, read N- to C-terminus: Peptide chain release factor 1 (357 aa).

The residue at position 236 (glutamine 236) is an N5-methylglutamine. The segment covering 284 to 293 (RRKKDQERAN) has biased composition (basic and acidic residues). A disordered region spans residues 284-313 (RRKKDQERANNRRKQIGSGDRSERIRTYNF).

Belongs to the prokaryotic/mitochondrial release factor family. Post-translationally, methylated by PrmC. Methylation increases the termination efficiency of RF1.

It is found in the cytoplasm. In terms of biological role, peptide chain release factor 1 directs the termination of translation in response to the peptide chain termination codons UAG and UAA. In Rickettsia bellii (strain RML369-C), this protein is Peptide chain release factor 1.